Reading from the N-terminus, the 192-residue chain is HTH-type transcriptional regulator Hpr (192 aa).

The HTH marR-type domain maps to 12–156; it reads SIIFSHKFAQ…LLSIVRHVYG (145 aa). The H-T-H motif DNA-binding region spans 62–85; that stretch reads ISDIAKFGVMHVSTAFNFSKKLEE.

In terms of assembly, homodimer.

Functionally, negative regulator of protease production and sporulation. This is HTH-type transcriptional regulator Hpr from Halalkalibacterium halodurans (strain ATCC BAA-125 / DSM 18197 / FERM 7344 / JCM 9153 / C-125) (Bacillus halodurans).